We begin with the raw amino-acid sequence, 201 residues long: Recombination protein RecR (201 aa).

The segment at 60–75 adopts a C4-type zinc-finger fold; the sequence is CSCCGNVDTSDPCTIC. In terms of domain architecture, Toprim spans 83–178; sequence ATLIVVEDVS…RVTRLAHGVP (96 aa).

This sequence belongs to the RecR family.

May play a role in DNA repair. It seems to be involved in an RecBC-independent recombinational process of DNA repair. It may act with RecF and RecO. The chain is Recombination protein RecR from Brucella melitensis biotype 1 (strain ATCC 23456 / CCUG 17765 / NCTC 10094 / 16M).